Reading from the N-terminus, the 387-residue chain is Succinate--CoA ligase [ADP-forming] subunit beta (387 aa).

In terms of domain architecture, ATP-grasp spans 9-236 (RDLFEKYGVP…KAAADPLEAK (228 aa)). ATP-binding positions include Lys45, 52–54 (GRG), Ala94, and Glu99. Residues Asn191 and Asp205 each contribute to the Mg(2+) site. Residues Asn256 and 318–320 (GIT) contribute to the substrate site.

It belongs to the succinate/malate CoA ligase beta subunit family. Heterotetramer of two alpha and two beta subunits. It depends on Mg(2+) as a cofactor.

It catalyses the reaction succinate + ATP + CoA = succinyl-CoA + ADP + phosphate. The catalysed reaction is GTP + succinate + CoA = succinyl-CoA + GDP + phosphate. Its pathway is carbohydrate metabolism; tricarboxylic acid cycle; succinate from succinyl-CoA (ligase route): step 1/1. Succinyl-CoA synthetase functions in the citric acid cycle (TCA), coupling the hydrolysis of succinyl-CoA to the synthesis of either ATP or GTP and thus represents the only step of substrate-level phosphorylation in the TCA. The beta subunit provides nucleotide specificity of the enzyme and binds the substrate succinate, while the binding sites for coenzyme A and phosphate are found in the alpha subunit. In Leifsonia xyli subsp. xyli (strain CTCB07), this protein is Succinate--CoA ligase [ADP-forming] subunit beta.